The sequence spans 237 residues: MPVKKKRKSPGVAAAVAEDGGLKKCKISSYCRSQPPARLISGEEHFSSKKCLAWFYEYAGPDEVVGPEGMEKFCEDIGVEPENIIMLVLAWKLEAESMGFFTKEEWLKGMTSLQCDCTEKLQNKFDFLRSQLNDISSFKNIYRYAFDFARDKDQRSLDIDTAKSMLALLLGRTWPLFSVFYQYLEQSKYRVMNKDQWYNVLEFSRTVHADLSNYDEDGAWPVLLDEFVEWQKVRQTS.

A phosphoserine mark is found at serine 9, serine 41, and serine 48. The region spanning 46 to 232 is the DCUN1 domain; the sequence is FSSKKCLAWF…LLDEFVEWQK (187 aa).

Part of a complex that contains DCUN1D5, CUL1 and RBX1; this interaction is bridged by CUL1. Interacts (via the DCUN1 domain) with the unneddylated cullins: interacts with CUL1, CUL2, CUL3, CUL4A, CUL4B and CUL5; these interactions promote the cullin neddylation and the identity of the cullin dictates the affinity of the interaction. Interacts (via DCUN1 domain) with UBE2M (N-terminally acetylated form) and probably with UBE2F (N-terminally acetylated form). May also interact with regulators or subunits of cullin-RING ligases such as RBX1, RNF7, ELOB and DDB1; these interactions are bridged by cullins. Interacts with CAND1; this interaction is bridged by cullins and strongly inhibits the neddylation of cullins. These CAND-cullin-DCNL complexes can only be neddylated in the presence of a substrate adapter. Phosphorylation at Ser-41 is independent of cullin's interaction. Phosphorylated in response to both TICAM1 and MYD88 dependent Toll-like receptor (TLR) pathway activation. Phosphorylated in response to IL1B stimulation. As to expression, weakly expressed in testis, skin and immune tissues (thymus, spleen and lymph nodes).

It localises to the nucleus. It is found in the cytoplasm. Its subcellular location is the cytoskeleton. The protein resides in the spindle. Functionally, contributes to the neddylation of all cullins by transferring NEDD8 from N-terminally acetylated NEDD8-conjugating E2s enzyme to different cullin C-terminal domain-RBX complexes which is necessary for the activation of cullin-RING E3 ubiquitin ligases (CRLs). May play a role in DNA damage response and may participate in cell proliferation and anchorage-independent cell growth. The sequence is that of DCN1-like protein 5 from Homo sapiens (Human).